The sequence spans 210 residues: MASYTIVYFPVQGRCEAMRMLLADQDQSWKEEVVAMQSWLQGPLKASCLYGQLPKFQDGDLTLYQSNAILRHLGRTLGLYGKDQREAALVDMVNDGVEDLRCKYVSLIYTNYQAGKEDYVKALPQHLKPFETLLSQNKGGQAFIVGDQISFADYNLLDLLRIHQVLAPSCLDSFPLLSAYVARLNSRPKLKAFLASPEHVNRPINGNGKQ.

A GST N-terminal domain is found at 2-81; sequence ASYTIVYFPV…HLGRTLGLYG (80 aa). The residue at position 4 (Y4) is a Phosphotyrosine; by EGFR. Glutathione contacts are provided by residues Y8, R14, W39, K45, and 52-53; that span reads QL. The residue at position 62 (T62) is a Phosphothreonine. 65 to 66 serves as a coordination point for glutathione; sequence QS. Positions 83–204 constitute a GST C-terminal domain; that stretch reads DQREAALVDM…ASPEHVNRPI (122 aa). N6-succinyllysine occurs at positions 103 and 116. Residue K128 is modified to N6-acetyllysine.

This sequence belongs to the GST superfamily. Pi family. As to quaternary structure, homodimer. Interacts with CDK5.

It localises to the cytoplasm. The protein resides in the mitochondrion. Its subcellular location is the nucleus. The catalysed reaction is RX + glutathione = an S-substituted glutathione + a halide anion + H(+). It carries out the reaction prostaglandin J2 + glutathione = prostaglandin J2-S-(R)-glutathione. It catalyses the reaction prostaglandin J2 + glutathione = prostaglandin J2-S-(S)-glutathione. The enzyme catalyses prostaglandin A2 + glutathione = prostaglandin A2-S-(S)-glutathione. The catalysed reaction is 11(S)-hydroxy-14(S),15(S)-epoxy-(5Z,8Z,12E)-eicosatrienoate + glutathione = (11S,15S)-dihydroxy-14(R)-S-glutathionyl-(5Z,8Z,12E)-eicosatrienoate. Its function is as follows. Conjugation of reduced glutathione to a wide number of exogenous and endogenous hydrophobic electrophiles. Involved in the formation of glutathione conjugates of both prostaglandin A2 (PGA2) and prostaglandin J2 (PGJ2). Participates in the formation of novel hepoxilin regioisomers. Negatively regulates CDK5 activity via p25/p35 translocation to prevent neurodegeneration. The polypeptide is Glutathione S-transferase P (GSTP1) (Capra hircus (Goat)).